The primary structure comprises 154 residues: Probable cyclic pyranopterin monophosphate synthase (154 aa).

Residues 74–76 and 110–111 contribute to the substrate site; these read LCH and ME. D125 is an active-site residue.

This sequence belongs to the MoaC family. In terms of assembly, homohexamer; trimer of dimers.

The catalysed reaction is (8S)-3',8-cyclo-7,8-dihydroguanosine 5'-triphosphate = cyclic pyranopterin phosphate + diphosphate. It participates in cofactor biosynthesis; molybdopterin biosynthesis. Functionally, catalyzes the conversion of (8S)-3',8-cyclo-7,8-dihydroguanosine 5'-triphosphate to cyclic pyranopterin monophosphate (cPMP). In Methanosphaerula palustris (strain ATCC BAA-1556 / DSM 19958 / E1-9c), this protein is Probable cyclic pyranopterin monophosphate synthase.